The following is a 428-amino-acid chain: Glutamate-1-semialdehyde 2,1-aminomutase (428 aa).

Residue lysine 265 is modified to N6-(pyridoxal phosphate)lysine.

It belongs to the class-III pyridoxal-phosphate-dependent aminotransferase family. HemL subfamily. In terms of assembly, homodimer. The cofactor is pyridoxal 5'-phosphate.

Its subcellular location is the cytoplasm. It catalyses the reaction (S)-4-amino-5-oxopentanoate = 5-aminolevulinate. It participates in porphyrin-containing compound metabolism; protoporphyrin-IX biosynthesis; 5-aminolevulinate from L-glutamyl-tRNA(Glu): step 2/2. This chain is Glutamate-1-semialdehyde 2,1-aminomutase, found in Shewanella loihica (strain ATCC BAA-1088 / PV-4).